A 302-amino-acid polypeptide reads, in one-letter code: MSHLRMLVMIEEHGQVSAAAAAMNMTQPAASRMLSEMEAIVKSPLCQRASRGVVLTKFGEALALARRARTILLELREASRELNQMKSGSGGSVYIGAVTAPAISLVVPAIRRAMDTYPGIEINVQVESSNVLARELLAARHDFIIGRIPDDFDPGLFSIHEIGIERACLVVREGHPLMRGEPVTLQDLSGYDWVFQPPGALLRRTMEDVFLTHGVAMPRNVINTPSVVLTLALVCNTNAIAPIAQDMAEFVAGQQADMAEPAFCQRISNSWSSLTASLPPKAGSCRPAPACFMIWCWMKAVS.

The 56-residue stretch at M1–T56 folds into the HTH lysR-type domain. A DNA-binding region (H-T-H motif) is located at residues V16–S35.

The protein belongs to the LysR transcriptional regulatory family.

Functionally, activator of the expression of chvE when bound to its inducer and represses its expression in the absence of inducer (L-arabinose, D-fucose or D-galactose). Negatively regulates its own expression. The polypeptide is HTH-type transcriptional regulator GbpR (gbpR) (Rhizobium radiobacter (Agrobacterium tumefaciens)).